Here is a 247-residue protein sequence, read N- to C-terminus: Phycocyanobilin:ferredoxin oxidoreductase (247 aa).

The protein belongs to the HY2 family.

It catalyses the reaction (2R,3Z)-phycocyanobilin + 4 oxidized [2Fe-2S]-[ferredoxin] = biliverdin IXalpha + 4 reduced [2Fe-2S]-[ferredoxin] + 4 H(+). Functionally, catalyzes the four-electron reduction of biliverdin IX-alpha (2-electron reduction at both the A and D rings); the reaction proceeds via an isolatable 2-electron intermediate, 181,182-dihydrobiliverdin. The chain is Phycocyanobilin:ferredoxin oxidoreductase (pcyA) from Prochlorococcus marinus (strain SARG / CCMP1375 / SS120).